Reading from the N-terminus, the 171-residue chain is Co-chaperone protein HscB homolog (171 aa).

The J domain maps to 2 to 74 (NHFELFGLPL…ISRAEYLLVQ (73 aa)).

This sequence belongs to the HscB family. Interacts with HscA and stimulates its ATPase activity.

In terms of biological role, co-chaperone involved in the maturation of iron-sulfur cluster-containing proteins. Seems to help targeting proteins to be folded toward HscA. The chain is Co-chaperone protein HscB homolog from Vibrio atlanticus (strain LGP32) (Vibrio splendidus (strain Mel32)).